The sequence spans 464 residues: Major capsid protein (464 aa).

Belongs to the NCLDV major capsid protein family. In terms of assembly, homotrimer. The N-terminus is blocked.

Its subcellular location is the virion. Major capsid protein that self assembles to form an icosahedral capsid. Represents around 50% of the total virion protein mass. This chain is Major capsid protein (MCP), found in Tipula (TIV).